A 535-amino-acid polypeptide reads, in one-letter code: Probable cytochrome P450 12b2, mitochondrial (535 aa).

Cys479 lines the heme pocket.

Belongs to the cytochrome P450 family. Heme serves as cofactor.

It localises to the mitochondrion membrane. The protein is Probable cytochrome P450 12b2, mitochondrial (Cyp12b2) of Drosophila melanogaster (Fruit fly).